We begin with the raw amino-acid sequence, 941 residues long: Cilia- and flagella-associated protein 69 (941 aa).

Over residues 1-10 (MWTEEAAATA) the composition is skewed to low complexity. The segment at 1 to 23 (MWTEEAAATAEARESGIRNKSSS) is disordered.

It is found in the cell projection. The protein localises to the cilium. The protein resides in the flagellum. Functionally, cilium- and flagellum-associated protein. In the olfactory epithelium, regulates the speed of activation and termination of the odor response and thus contributes to the robustness of olfactory transduction pathways. Required for sperm flagellum assembly and stability. This Papio anubis (Olive baboon) protein is Cilia- and flagella-associated protein 69.